The chain runs to 305 residues: MQHPREENSIVVELEPSLATFIKQGFNNLVKWPLLNIGIVLSNTSTAVNEEWLTAVEHIPTMKIFYKHIHKILTREMGFLVYLKRSQSERDNYITLYDFDYYIIDKDTNSVTMVDKPTELKETLLHVFQEYRLKSSQTIELIAFSSGTVINEDIVSKLTFLDVEVFNREYNNVKTIIDPDFVFRSPFIVISPMGKLTFFVEVYSWFDFKSCFKDIIDFLEGALIANIHNHMIKVGNCDETVSSYNPESGMLFVNDLMTMNIVNFFGCNSRLESYHRFDMTKVDVELFIKALSDACKKILSASNRL.

This sequence belongs to the poxviridae DNA-directed RNA polymerase 35 kDa subunit family. In terms of assembly, the DNA-dependent RNA polymerase used for intermediate and late genes expression consists of eight subunits 147 kDa, 133 kDa, 35 kDa, 30 kDa, 22 kDa, 19 kDa, 18 kDa and 7 kDa totalling more than 500 kDa in mass. The same holoenzyme, with the addition of the transcription-specificity factor RAP94, is used for early gene expression.

It is found in the virion. It catalyses the reaction RNA(n) + a ribonucleoside 5'-triphosphate = RNA(n+1) + diphosphate. Functionally, part of the DNA-dependent RNA polymerase which catalyzes the transcription of viral DNA into RNA using the four ribonucleoside triphosphates as substrates. Responsible for the transcription of early, intermediate and late genes. DNA-dependent RNA polymerase associates with the early transcription factor (ETF), itself composed of D6 and A7, thereby allowing the early genes transcription. Late transcription, and probably also intermediate transcription, require newly synthesized RNA polymerase. The polypeptide is DNA-directed RNA polymerase 35 kDa subunit (RPO35) (Homo sapiens (Human)).